Consider the following 478-residue polypeptide: PRAME family member 15 (478 aa).

An LRR 1; degenerate repeat occupies 99–126 (RWKLQVLDLQDVCENFWMVWSEAMAHGC). Residues 181–205 (HLCCKKLKILGMPFRNIRSILKMVN) form an LRR 2; degenerate repeat. The LRR 3; degenerate repeat unit spans residues 206 to 232 (LDCIQEVEVNCKWVLPILTQFTPYLGH). The stretch at 233–268 (MRNLQKLVLSHMDVSRYVSPEQKKEIVTQFTTQFLK) is one LRR 4; degenerate repeat. 5 LRR repeats span residues 269–294 (LRCL…LSCL), 295–326 (KTSL…SQLK), 327–347 (TLDL…QILL), 351–378 (AATL…ALSR), and 379–403 (CFEL…LLSH).

Belongs to the PRAME family.

In Homo sapiens (Human), this protein is PRAME family member 15.